Reading from the N-terminus, the 185-residue chain is Ribosome-recycling factor (185 aa).

Belongs to the RRF family.

Its subcellular location is the cytoplasm. Its function is as follows. Responsible for the release of ribosomes from messenger RNA at the termination of protein biosynthesis. May increase the efficiency of translation by recycling ribosomes from one round of translation to another. The sequence is that of Ribosome-recycling factor from Shouchella clausii (strain KSM-K16) (Alkalihalobacillus clausii).